The following is a 29-amino-acid chain: Cyclotide mela-2 (29 aa).

Positions 1 to 29 (GKPTCGETCFKGKCYTPGCTCSYPLCKKD) form a cross-link, cyclopeptide (Gly-Asp). Intrachain disulfides connect cysteine 5–cysteine 19, cysteine 9–cysteine 21, and cysteine 14–cysteine 26.

In terms of processing, this is a cyclic peptide. Post-translationally, contains 3 disulfide bonds.

Functionally, probably participates in a plant defense mechanism (Potential). Binds to and induces leakage in phospholipd membranes, particularly ones containing 1-palmitoyl-2-oleophosphatidylethanolamine (POPE). In vitro, displays cytotoxicity against cultured cells but no hemolytic activity towards fresh erythrocytes. Not active against Gram-negative bacterium E.coli ATCC 25922 or Gram-positive bacterium S.aureus ATCC 25923 up to a concentration of 64 uM. The protein is Cyclotide mela-2 of Melicytus latifolius (Norfolk Island mahoe).